The chain runs to 225 residues: LHFPL tetraspan subfamily member 2a protein (225 aa).

Transmembrane regions (helical) follow at residues 11 to 31, 99 to 119, 129 to 149, and 178 to 198; these read MLWTLLSIVAAFSELIAFLST, IFLAAGILLLCAVAFISIFTM, IFNVCGLLQAIAGLFLIVGLV, and AGWAFYTALAGTVLCFLCAVF.

The protein belongs to the LHFP family.

It localises to the membrane. Functionally, plays a role in fertility. Involved in distal reproductive tract development. In Danio rerio (Zebrafish), this protein is LHFPL tetraspan subfamily member 2a protein.